The primary structure comprises 322 residues: Eukaryotic translation initiation factor 3 subunit I (322 aa).

5 WD repeats span residues 4-43 (GHER…RLGT), 46-85 (GHQG…VIAS), 141-180 (MTES…KVVD), 184-223 (DHTG…CLKT), and 281-322 (GHFG…NIFE).

Belongs to the eIF-3 subunit I family. Component of the eukaryotic translation initiation factor 3 (eIF-3) complex. The eIF-3 complex interacts with pix.

Its subcellular location is the cytoplasm. Component of the eukaryotic translation initiation factor 3 (eIF-3) complex, which is involved in protein synthesis of a specialized repertoire of mRNAs and, together with other initiation factors, stimulates binding of mRNA and methionyl-tRNAi to the 40S ribosome. The eIF-3 complex specifically targets and initiates translation of a subset of mRNAs involved in cell proliferation. This is Eukaryotic translation initiation factor 3 subunit I from Drosophila willistoni (Fruit fly).